The chain runs to 338 residues: Lipoate-protein ligase A (338 aa).

The BPL/LPL catalytic domain occupies 29–216; that stretch reads PATQRVLFLW…AFFAHYGERI (188 aa). ATP is bound by residues arginine 71, 76–79, and lysine 134; that span reads GAVF. Lysine 134 contacts (R)-lipoate.

Belongs to the LplA family. In terms of assembly, monomer.

Its subcellular location is the cytoplasm. It carries out the reaction L-lysyl-[lipoyl-carrier protein] + (R)-lipoate + ATP = N(6)-[(R)-lipoyl]-L-lysyl-[lipoyl-carrier protein] + AMP + diphosphate + H(+). It participates in protein modification; protein lipoylation via exogenous pathway; protein N(6)-(lipoyl)lysine from lipoate: step 1/2. Its pathway is protein modification; protein lipoylation via exogenous pathway; protein N(6)-(lipoyl)lysine from lipoate: step 2/2. In terms of biological role, catalyzes both the ATP-dependent activation of exogenously supplied lipoate to lipoyl-AMP and the transfer of the activated lipoyl onto the lipoyl domains of lipoate-dependent enzymes. The protein is Lipoate-protein ligase A of Salmonella paratyphi A (strain ATCC 9150 / SARB42).